The chain runs to 344 residues: HTH-type transcriptional regulator XC_2801 (344 aa).

Residues 3-60 enclose the HTH lysR-type domain; sequence HDLNDTLIFVKVVEQGSFIAAANSLGLPKTTVSRKVQELETRLGARLLHRTTRRIGLT. A DNA-binding region (H-T-H motif) is located at residues 20–39; the sequence is FIAAANSLGLPKTTVSRKVQ.

Belongs to the LysR transcriptional regulatory family. Interacts with the cyclic di-GMP effector XC_3703.

Activity is regulated by cyclic di-GMP. Cyclic di-GMP specifically binds to XC_3703, which inhibits the interaction of the XC_2801-XC_3703 complex with DNA and prevents the transcription of the target genes. Transcriptional regulator that directly or indirectly regulates the expression of virulence-related genes, including flhB, aaeA, fliL and flgG. Binds to the promoter of the target genes only in the presence of XC_3703. This chain is HTH-type transcriptional regulator XC_2801, found in Xanthomonas campestris pv. campestris (strain 8004).